The following is a 311-amino-acid chain: NAD kinase (311 aa).

Aspartate 67 (proton acceptor) is an active-site residue. NAD(+) contacts are provided by residues 67–68 (DG), arginine 72, 140–141 (ND), arginine 151, aspartate 170, 181–186 (TAYSLS), and glutamine 240. A compositionally biased stretch (basic and acidic residues) spans 278-287 (LKEGGSRQDD). Residues 278–311 (LKEGGSRQDDENPAATVNPETDSKYPHSHPGSTG) are disordered.

Belongs to the NAD kinase family. Requires a divalent metal cation as cofactor.

Its subcellular location is the cytoplasm. The enzyme catalyses NAD(+) + ATP = ADP + NADP(+) + H(+). Its function is as follows. Involved in the regulation of the intracellular balance of NAD and NADP, and is a key enzyme in the biosynthesis of NADP. Catalyzes specifically the phosphorylation on 2'-hydroxyl of the adenosine moiety of NAD to yield NADP. The protein is NAD kinase of Moorella thermoacetica (strain ATCC 39073 / JCM 9320).